The sequence spans 178 residues: Inner membrane-spanning protein YciB (178 aa).

5 helical membrane-spanning segments follow: residues 22–42 (IFYA…MTYF), 50–70 (ASLI…AFHS), 72–92 (LFIK…LLGS), 121–141 (MAWA…AFWL), and 149–169 (FKVF…VVYI).

This sequence belongs to the YciB family.

The protein localises to the cell inner membrane. Plays a role in cell envelope biogenesis, maintenance of cell envelope integrity and membrane homeostasis. The chain is Inner membrane-spanning protein YciB from Photorhabdus laumondii subsp. laumondii (strain DSM 15139 / CIP 105565 / TT01) (Photorhabdus luminescens subsp. laumondii).